Reading from the N-terminus, the 301-residue chain is uncharacterized protein (301 aa).

Residues Ser-44 and Tyr-107 each act as charge relay system in the active site. The Proton donor role is filled by Tyr-133. Lys-162 (schiff-base intermediate with substrate) is an active-site residue.

This sequence belongs to the DapA family. Homotetramer.

It is found in the cytoplasm. This is an uncharacterized protein from Pyrobaculum arsenaticum (strain DSM 13514 / JCM 11321 / PZ6).